The following is a 182-amino-acid chain: NADH-dependent FAD reductase (182 aa).

Asp16 contributes to the NAD(+) binding site. FAD-binding positions include 47 to 48 (NS), 62 to 64 (CVG), and His98. An NAD(+)-binding site is contributed by His143.

It belongs to the non-flavoprotein flavin reductase family. As to quaternary structure, homodimer.

It carries out the reaction FADH2 + NAD(+) = FAD + NADH + 2 H(+). The protein operates within antibiotic biosynthesis. The SgcE6-SgcC hydroxylation activity decreases in the presence of excess FAD. Functionally, reductase component of a two-component system involved in the biosynthesis of the enediyne antitumor antibiotic C-1027. SgcE6 provides the FADH(2) required by both the halogenase SgcC3 and the monooxygenase SgcC through free diffusion. Accepts only NADH and FAD as substrates. In Streptomyces globisporus, this protein is NADH-dependent FAD reductase.